The following is a 446-amino-acid chain: Tubulin beta chain (446 aa).

GTP contacts are provided by Gln-11, Glu-69, Ser-138, Gly-142, Thr-143, Gly-144, Asn-204, and Asn-226. Position 69 (Glu-69) interacts with Mg(2+). The disordered stretch occupies residues 423–446 (QQYQDATADEEEGEYEEEPAEEEQ). Acidic residues predominate over residues 429 to 446 (TADEEEGEYEEEPAEEEQ).

The protein belongs to the tubulin family. As to quaternary structure, dimer of alpha and beta chains. A typical microtubule is a hollow water-filled tube with an outer diameter of 25 nm and an inner diameter of 15 nM. Alpha-beta heterodimers associate head-to-tail to form protofilaments running lengthwise along the microtubule wall with the beta-tubulin subunit facing the microtubule plus end conferring a structural polarity. Microtubules usually have 13 protofilaments but different protofilament numbers can be found in some organisms and specialized cells. It depends on Mg(2+) as a cofactor.

It localises to the cytoplasm. The protein localises to the cytoskeleton. Functionally, tubulin is the major constituent of microtubules, a cylinder consisting of laterally associated linear protofilaments composed of alpha- and beta-tubulin heterodimers. Microtubules grow by the addition of GTP-tubulin dimers to the microtubule end, where a stabilizing cap forms. Below the cap, tubulin dimers are in GDP-bound state, owing to GTPase activity of alpha-tubulin. This Pleurotus sajor-caju (Oyster mushroom) protein is Tubulin beta chain.